A 702-amino-acid polypeptide reads, in one-letter code: Elongation factor G (702 aa).

Residues 8–290 form the tr-type G domain; the sequence is CQYRNIGISA…AIIEYLPAPN (283 aa). Residues 17 to 24, 88 to 92, and 142 to 145 each bind GTP; these read AHIDAGKT, DTPGH, and NKMD.

This sequence belongs to the TRAFAC class translation factor GTPase superfamily. Classic translation factor GTPase family. EF-G/EF-2 subfamily.

The protein localises to the cytoplasm. In terms of biological role, catalyzes the GTP-dependent ribosomal translocation step during translation elongation. During this step, the ribosome changes from the pre-translocational (PRE) to the post-translocational (POST) state as the newly formed A-site-bound peptidyl-tRNA and P-site-bound deacylated tRNA move to the P and E sites, respectively. Catalyzes the coordinated movement of the two tRNA molecules, the mRNA and conformational changes in the ribosome. The polypeptide is Elongation factor G (Buchnera aphidicola subsp. Schizaphis graminum (strain Sg)).